The sequence spans 878 residues: Pyruvate dehydrogenase phosphatase regulatory subunit, mitochondrial (878 aa).

The N-terminal 26 residues, 1–26 (MLPRLLAVVRGPGSCRGWREGSPARG), are a transit peptide targeting the mitochondrion.

Belongs to the GcvT family. As to quaternary structure, heterodimer of a catalytic (PDP1) and a regulatory (PDPR) subunit.

The protein resides in the mitochondrion matrix. In terms of biological role, decreases the sensitivity of PDP1 to magnesium ions, and this inhibition is reversed by the polyamine spermine. This chain is Pyruvate dehydrogenase phosphatase regulatory subunit, mitochondrial (PDPR), found in Bos taurus (Bovine).